The primary structure comprises 339 residues: D-alanine--D-alanine ligase (339 aa).

An ATP-grasp domain is found at 115-327; the sequence is KHIFRSLGID…FNELVKIIIE (213 aa). 142 to 211 contacts ATP; that stretch reads KIDYPYVLKP…EEYIPGIELH (70 aa). Asp-279, Glu-293, and Asn-295 together coordinate Mg(2+).

The protein belongs to the D-alanine--D-alanine ligase family. The cofactor is Mg(2+). It depends on Mn(2+) as a cofactor.

Its subcellular location is the cytoplasm. It carries out the reaction 2 D-alanine + ATP = D-alanyl-D-alanine + ADP + phosphate + H(+). It functions in the pathway cell wall biogenesis; peptidoglycan biosynthesis. Cell wall formation. The sequence is that of D-alanine--D-alanine ligase from Wolbachia sp. subsp. Brugia malayi (strain TRS).